The primary structure comprises 80 residues: UPF0057 membrane protein ZK632.10 (80 aa).

2 consecutive transmembrane segments (helical) span residues 4 to 24 (ILLA…DVGC) and 32 to 52 (ILLT…IILC).

The protein belongs to the UPF0057 (PMP3) family.

The protein resides in the membrane. This Caenorhabditis elegans protein is UPF0057 membrane protein ZK632.10.